Consider the following 353-residue polypeptide: D-glycerol 3-phosphate phosphatase (353 aa).

The active-site Nucleophile is the aspartate 14. Aspartate 14, aspartate 16, and aspartate 209 together coordinate Mg(2+). Catalysis depends on aspartate 16, which acts as the Proton donor.

Belongs to the HAD-like hydrolase superfamily. As to quaternary structure, homodimer. Mg(2+) is required as a cofactor. Requires Co(2+) as cofactor. The cofactor is Mn(2+).

It carries out the reaction sn-glycerol 1-phosphate + H2O = glycerol + phosphate. It functions in the pathway glycerolipid metabolism. Functionally, dephosphorylates D-glycerol 3-phosphate (sn-glycerol 1-phosphate). Is the final enzyme involved in the recycling/catabolism of glycerophospholipid polar heads. To a lesser extent, is also able to act on glycerol 2-phosphate and D-ribulose 5-phosphate, but cannot use D-glyceraldehyde 3-phosphate, dihydroxyacetone-phosphate, UMP or GMP as substrates. In Mycobacterium tuberculosis (strain ATCC 25618 / H37Rv), this protein is D-glycerol 3-phosphate phosphatase.